We begin with the raw amino-acid sequence, 156 residues long: Aspartate 1-decarboxylase (156 aa).

Catalysis depends on S26, which acts as the Schiff-base intermediate with substrate; via pyruvic acid. Position 26 is a pyruvic acid (Ser) (S26). Residue T58 coordinates substrate. The active-site Proton donor is the Y59. A substrate-binding site is contributed by 74–76 (GGA).

It belongs to the PanD family. In terms of assembly, heterooctamer of four alpha and four beta subunits. Requires pyruvate as cofactor. In terms of processing, is synthesized initially as an inactive proenzyme, which is activated by self-cleavage at a specific serine bond to produce a beta-subunit with a hydroxyl group at its C-terminus and an alpha-subunit with a pyruvoyl group at its N-terminus.

The protein localises to the cytoplasm. The enzyme catalyses L-aspartate + H(+) = beta-alanine + CO2. Its pathway is cofactor biosynthesis; (R)-pantothenate biosynthesis; beta-alanine from L-aspartate: step 1/1. In terms of biological role, catalyzes the pyruvoyl-dependent decarboxylation of aspartate to produce beta-alanine. This Gloeothece citriformis (strain PCC 7424) (Cyanothece sp. (strain PCC 7424)) protein is Aspartate 1-decarboxylase.